A 290-amino-acid polypeptide reads, in one-letter code: Small ribosomal subunit protein uS2 (290 aa).

It belongs to the universal ribosomal protein uS2 family. Component of the small ribosomal subunit. Mature ribosomes consist of a small (40S) and a large (60S) subunit. The 40S subunit contains about 33 different proteins and 1 molecule of RNA (18S). The 60S subunit contains about 49 different proteins and 3 molecules of RNA (28S, 5.8S and 5S). Interacts with ribosomal protein S21.

The protein resides in the cytoplasm. Its function is as follows. Required for the assembly and/or stability of the 40S ribosomal subunit. Required for the processing of the 20S rRNA-precursor to mature 18S rRNA in a late step of the maturation of 40S ribosomal subunits. The polypeptide is Small ribosomal subunit protein uS2 (Culex quinquefasciatus (Southern house mosquito)).